The sequence spans 178 residues: NAD(P)H-quinone oxidoreductase subunit 6, chloroplastic (178 aa).

A run of 5 helical transmembrane segments spans residues 10 to 30 (FILVFLGSGLILGGLGVVLFT), 32 to 52 (PIYSAFSLGLVLVCISLFYIL), 61 to 81 (AQLLIYVGAVNVLIIFAVMFM), 94 to 114 (LWTIGDGLTSLVCTSIFFSLI), and 154 to 174 (FFLPFELVSIILLVALIGAIA).

The protein belongs to the complex I subunit 6 family. In terms of assembly, NDH is composed of at least 16 different subunits, 5 of which are encoded in the nucleus.

It is found in the plastid. Its subcellular location is the chloroplast thylakoid membrane. It catalyses the reaction a plastoquinone + NADH + (n+1) H(+)(in) = a plastoquinol + NAD(+) + n H(+)(out). It carries out the reaction a plastoquinone + NADPH + (n+1) H(+)(in) = a plastoquinol + NADP(+) + n H(+)(out). Its function is as follows. NDH shuttles electrons from NAD(P)H:plastoquinone, via FMN and iron-sulfur (Fe-S) centers, to quinones in the photosynthetic chain and possibly in a chloroplast respiratory chain. The immediate electron acceptor for the enzyme in this species is believed to be plastoquinone. Couples the redox reaction to proton translocation, and thus conserves the redox energy in a proton gradient. This chain is NAD(P)H-quinone oxidoreductase subunit 6, chloroplastic (ndhG), found in Citrus sinensis (Sweet orange).